The sequence spans 150 residues: Cilia- and flagella-associated protein 68 (150 aa).

Mn stretches follow at residues 99-110 (TTYDTSYNNKMP) and 140-150 (KSTYMNSYSKS).

Belongs to the CFAP68 family. Microtubule inner protein component of sperm flagellar doublet microtubules.

Its subcellular location is the cytoplasm. It is found in the cytoskeleton. The protein localises to the cilium axoneme. It localises to the flagellum axoneme. The protein resides in the nucleus. Its subcellular location is the cell projection. It is found in the cilium. In terms of biological role, microtubule inner protein (MIP) part of the dynein-decorated doublet microtubules (DMTs) in cilia axoneme, which is required for motile cilia beating. The protein is Cilia- and flagella-associated protein 68 (CFAP68) of Macaca fascicularis (Crab-eating macaque).